A 363-amino-acid chain; its full sequence is tRNA(Met) cytidine acetate ligase (363 aa).

Residues isoleucine 7 to leucine 20, glycine 96, asparagine 152, and arginine 175 each bind ATP.

It belongs to the TmcAL family.

The protein resides in the cytoplasm. The catalysed reaction is cytidine(34) in elongator tRNA(Met) + acetate + ATP = N(4)-acetylcytidine(34) in elongator tRNA(Met) + AMP + diphosphate. Catalyzes the formation of N(4)-acetylcytidine (ac(4)C) at the wobble position of elongator tRNA(Met), using acetate and ATP as substrates. First activates an acetate ion to form acetyladenylate (Ac-AMP) and then transfers the acetyl group to tRNA to form ac(4)C34. In Streptococcus thermophilus (strain ATCC BAA-250 / LMG 18311), this protein is tRNA(Met) cytidine acetate ligase.